The following is a 61-amino-acid chain: Photosystem II reaction center protein K (61 aa).

Residues 1 to 24 (MLNILNLICICLNFALYSSSFFFT) constitute a propeptide that is removed on maturation. A helical membrane pass occupies residues 40 to 60 (MPVIPLFFFLLAFVWQAAVSF).

This sequence belongs to the PsbK family. As to quaternary structure, PSII is composed of 1 copy each of membrane proteins PsbA, PsbB, PsbC, PsbD, PsbE, PsbF, PsbH, PsbI, PsbJ, PsbK, PsbL, PsbM, PsbT, PsbX, PsbY, PsbZ, Psb30/Ycf12, at least 3 peripheral proteins of the oxygen-evolving complex and a large number of cofactors. It forms dimeric complexes.

Its subcellular location is the plastid. The protein resides in the chloroplast thylakoid membrane. Functionally, one of the components of the core complex of photosystem II (PSII). PSII is a light-driven water:plastoquinone oxidoreductase that uses light energy to abstract electrons from H(2)O, generating O(2) and a proton gradient subsequently used for ATP formation. It consists of a core antenna complex that captures photons, and an electron transfer chain that converts photonic excitation into a charge separation. This Populus alba (White poplar) protein is Photosystem II reaction center protein K.